Consider the following 239-residue polypeptide: Acidic leucine-rich nuclear phosphoprotein 32 family member B (239 aa).

LRR repeat units lie at residues 16-40 (AADA…LTSE), 43-64 (SLEF…PKLP), 65-87 (KLKK…AERT), and 89-110 (NLTH…EPLK). The region spanning 123–165 (CEVTMLNNYRESVFELLPKLTFLDGFDADDQEAPDSDPEAEDL) is the LRRCT domain. The segment covering 149–215 (DADDQEAPDS…EEDEDDEDVP (67 aa)) has biased composition (acidic residues). The segment at 149-239 (DADDQEAPDS…EEEEDDEDDE (91 aa)) is disordered. Basic and acidic residues predominate over residues 216-225 (QGEKRKRDLS). The span at 226 to 239 (DEGEEEEEDDEDDE) shows a compositional bias: acidic residues.

This sequence belongs to the ANP32 family.

The protein localises to the nucleus. In terms of biological role, multifunctional protein working as a cell cycle progression factor as well as a cell survival factor. Required for the progression from the G1 to the S phase. Anti-apoptotic protein which functions as a caspase-3 inhibitor. Has no phosphatase 2A (PP2A) inhibitor activity. Exhibits histone chaperone properties, stimulating core histones to assemble into a nucleosome. This is Acidic leucine-rich nuclear phosphoprotein 32 family member B (anp32b) from Xenopus laevis (African clawed frog).